A 692-amino-acid chain; its full sequence is Elongation factor G (692 aa).

Residues 8-282 (EKTRNIGIMA…AVIDYLPSPL (275 aa)) enclose the tr-type G domain. Residues 17-24 (AHVDAGKT), 81-85 (DTPGH), and 135-138 (NKMD) each bind GTP.

This sequence belongs to the TRAFAC class translation factor GTPase superfamily. Classic translation factor GTPase family. EF-G/EF-2 subfamily.

Its subcellular location is the cytoplasm. Functionally, catalyzes the GTP-dependent ribosomal translocation step during translation elongation. During this step, the ribosome changes from the pre-translocational (PRE) to the post-translocational (POST) state as the newly formed A-site-bound peptidyl-tRNA and P-site-bound deacylated tRNA move to the P and E sites, respectively. Catalyzes the coordinated movement of the two tRNA molecules, the mRNA and conformational changes in the ribosome. The protein is Elongation factor G of Streptococcus agalactiae serotype III (strain NEM316).